Here is a 359-residue protein sequence, read N- to C-terminus: DNA replication and repair protein RecF (359 aa).

30–37 (GPNGSGKT) provides a ligand contact to ATP.

Belongs to the RecF family.

The protein localises to the cytoplasm. Functionally, the RecF protein is involved in DNA metabolism; it is required for DNA replication and normal SOS inducibility. RecF binds preferentially to single-stranded, linear DNA. It also seems to bind ATP. In Vibrio parahaemolyticus serotype O3:K6 (strain RIMD 2210633), this protein is DNA replication and repair protein RecF.